A 367-amino-acid chain; its full sequence is Queuine tRNA-ribosyltransferase (367 aa).

Residue Asp-89 is the Proton acceptor of the active site. Substrate is bound by residues 89 to 93 (DSGGF), Asp-143, Gln-187, and Gly-214. An RNA binding region spans residues 245 to 251 (GVGTPAD). Asp-264 serves as the catalytic Nucleophile. The RNA binding; important for wobble base 34 recognition stretch occupies residues 269-273 (TRNAR). The Zn(2+) site is built by Cys-302, Cys-304, Cys-307, and His-333.

This sequence belongs to the queuine tRNA-ribosyltransferase family. Homodimer. Within each dimer, one monomer is responsible for RNA recognition and catalysis, while the other monomer binds to the replacement base PreQ1. Zn(2+) is required as a cofactor.

The catalysed reaction is 7-aminomethyl-7-carbaguanine + guanosine(34) in tRNA = 7-aminomethyl-7-carbaguanosine(34) in tRNA + guanine. The protein operates within tRNA modification; tRNA-queuosine biosynthesis. Functionally, catalyzes the base-exchange of a guanine (G) residue with the queuine precursor 7-aminomethyl-7-deazaguanine (PreQ1) at position 34 (anticodon wobble position) in tRNAs with GU(N) anticodons (tRNA-Asp, -Asn, -His and -Tyr). Catalysis occurs through a double-displacement mechanism. The nucleophile active site attacks the C1' of nucleotide 34 to detach the guanine base from the RNA, forming a covalent enzyme-RNA intermediate. The proton acceptor active site deprotonates the incoming PreQ1, allowing a nucleophilic attack on the C1' of the ribose to form the product. After dissociation, two additional enzymatic reactions on the tRNA convert PreQ1 to queuine (Q), resulting in the hypermodified nucleoside queuosine (7-(((4,5-cis-dihydroxy-2-cyclopenten-1-yl)amino)methyl)-7-deazaguanosine). The protein is Queuine tRNA-ribosyltransferase of Nitrosospira multiformis (strain ATCC 25196 / NCIMB 11849 / C 71).